Reading from the N-terminus, the 194-residue chain is Small ribosomal subunit protein uS7 (194 aa).

The protein belongs to the universal ribosomal protein uS7 family. In terms of assembly, part of the 30S ribosomal subunit.

In terms of biological role, one of the primary rRNA binding proteins, it binds directly to 16S rRNA where it nucleates assembly of the head domain of the 30S subunit. Is located at the subunit interface close to the decoding center. In Methanococcus vannielii (strain ATCC 35089 / DSM 1224 / JCM 13029 / OCM 148 / SB), this protein is Small ribosomal subunit protein uS7.